Consider the following 523-residue polypeptide: MSQQVIIFDTTLRDGEQALQASLSAKEKLQIALALERMGVDVMEVGFPVSSPGDFESVQTIARTIKNSRVCALARCVEKDIDVAAQALKVADAFRIHTFIATSPMHIATKLRSTLDEVIERAVYMVKRARNYTDDVEFSCEDAGRTPVDDLARVVEAAINAGARTINIPDTVGYTMPFEFAGIISGLYERVPNIDKAIISVHTHDDLGIAVGNSLAAVHAGARQVEGAMNGIGERAGNCALEEVIMAIKVRKDIINVHTNINHHEIWRTSQTVSQICNMPIPANKAIVGSGAFAHSSGIHQDGVLKNRENYEIMTPESIGLNQIQLNLTSRSGRAAVKHRMEEMGYKDTDYNMGHLYDAFLKLADKKGQVFDYDLEALAFINKQQEEPEHFRLDYFSVQSGSSDIATASVKLACGEEIKAEAANGNGPVDAIYQAINRITGYDVELVKYDLNAKGQGKDALGQVDIVVNHHGRRFHGVGLATDIVESSAKAMVHVLNNIWRAAEVEKELQRKAQNKENNKETV.

The Pyruvate carboxyltransferase domain occupies 5 to 267 (VIIFDTTLRD…HTNINHHEIW (263 aa)). Positions 14, 202, 204, and 238 each coordinate Mn(2+). The tract at residues 392-523 (RLDYFSVQSG…QNKENNKETV (132 aa)) is regulatory domain.

Belongs to the alpha-IPM synthase/homocitrate synthase family. LeuA type 1 subfamily. Homodimer. The cofactor is Mn(2+).

It is found in the cytoplasm. The catalysed reaction is 3-methyl-2-oxobutanoate + acetyl-CoA + H2O = (2S)-2-isopropylmalate + CoA + H(+). It participates in amino-acid biosynthesis; L-leucine biosynthesis; L-leucine from 3-methyl-2-oxobutanoate: step 1/4. Its function is as follows. Catalyzes the condensation of the acetyl group of acetyl-CoA with 3-methyl-2-oxobutanoate (2-ketoisovalerate) to form 3-carboxy-3-hydroxy-4-methylpentanoate (2-isopropylmalate). This is 2-isopropylmalate synthase from Salmonella typhi.